The following is a 1964-amino-acid chain: Neurogenic locus notch homolog protein 4 (1964 aa).

Residues 1–20 (MQPQLLLLLLLPLNFPVILT) form the signal peptide. 4 consecutive EGF-like domains span residues 21–60 (RELL…ETCQ), 61–112 (FPDP…DRCQ), 115–152 (LEEL…EQCQ), and 153–189 (LRDF…HTCE). Over 21 to 1443 (RELLCGGSPE…TRPSANQLPW (1423 aa)) the chain is Extracellular. 95 cysteine pairs are disulfide-bonded: C25/C38, C32/C48, C50/C59, C65/C77, C71/C100, C102/C111, C119/C130, C124/C140, C142/C151, C157/C168, C162/C177, C179/C188, C195/C208, C202/C217, C219/C228, C235/C246, C240/C259, C261/C270, C277/C288, C282/C297, C299/C308, C315/C329, C323/C338, C340/C349, C356/C367, C361/C376, C378/C387, C393/C404, C398/C415, C417/C426, C433/C449, C443/C458, C460/C469, C476/C487, C481/C496, C498/C507, C514/C525, C519/C534, C536/C545, C552/C563, C557/C572, C574/C583, C590/C601, C595/C610, C612/C621, C626/C637, C631/C646, C648/C655, C662/C669, C664/C674, C676/C685, C692/C703, C697/C712, C714/C723, C730/C741, C735/C750, C752/C761, C768/C779, C773/C788, C790/C799, C807/C818, C812/C827, C829/C838, C845/C856, C850/C865, C867/C876, C882/C903, C897/C912, C914/C923, C930/C941, C935/C950, C952/C961, C968/C979, C973/C988, C990/C999, C1006/C1019, C1011/C1028, C1030/C1039, C1046/C1057, C1051/C1069, C1071/C1080, C1087/C1098, C1092/C1110, C1112/C1121, C1130/C1142, C1136/C1155, C1157/C1166, C1174/C1187, C1183/C1199, C1210/C1234, C1216/C1229, C1225/C1241, C1247/C1273, C1255/C1268, and C1264/C1280. The 39-residue stretch at 191 to 229 (DINECFLEPGPCPQGTSCHNTLGSYQCLCPVGQEGPQCK) folds into the EGF-like 5; calcium-binding domain. The 41-residue stretch at 231 to 271 (RKGACPPGSCLNGGTCQLVPEGHSTFHLCLCPPGFTGLDCE) folds into the EGF-like 6 domain. The region spanning 273–309 (NPDDCVRHQCQNGATCLDGLDTYTCLCPKTWKGWDCS) is the EGF-like 7; calcium-binding domain. The region spanning 311–350 (DIDECEARGPPRCRNGGTCQNTAGSFHCVCVSGWGGAGCE) is the EGF-like 8; calcium-binding domain. The EGF-like 9; calcium-binding domain maps to 352–388 (NLDDCAAATCAPGSTCIDRVGSFSCLCPPGRTGLLCH). The EGF-like 10 domain occupies 389–427 (LEDMCLSQPCHVNAQCSTNPLTGSTLCICQPGYSGSTCH). Positions 429–470 (DLDECQMAQQGPSPCEHGGSCINTPGSFNCLCLPGYTGSRCE) constitute an EGF-like 11; calcium-binding domain. The EGF-like 12; calcium-binding domain maps to 472-508 (DHNECLSQPCHPGSTCLDLLATFHCLCPPGLEGRLCE). In terms of domain architecture, EGF-like 13; calcium-binding spans 510–546 (EVNECTSNPCLNQAACHDLLNGFQCLCLPGFTGARCE). In terms of domain architecture, EGF-like 14; calcium-binding spans 548–584 (DMDECSSTPCANGGRCRDQPGAFYCECLPGFEGPHCE). An EGF-like 15; calcium-binding domain is found at 586–622 (EVDECLSDPCPVGASCLDLPGAFFCLCRPGFTGQLCE). 14 consecutive EGF-like domains span residues 623–656 (VPLC…PGCV), 658–686 (AEDN…PECE), 688–724 (ELGG…LTCS), 726–762 (EVTA…RHCQ), 764–800 (AVDH…LHCE), 803–839 (TNPS…SSCQ), 841–877 (LIDL…ALCD), 878–924 (FPLS…KLCQ), 926–962 (NVNP…QNCS), 964–1000 (VLDA…LRCE), 1002–1040 (DVDE…QRCE), 1042–1081 (EMDL…PTCS), 1083–1122 (KALS…PDCL), and 1126–1167 (APPG…PRCQ). A glycan (N-linked (GlcNAc...) asparagine) is linked at N711. N-linked (GlcNAc...) asparagine glycosylation occurs at N960. N1139 carries an N-linked (GlcNAc...) asparagine glycan. LNR repeat units follow at residues 1166-1209 (CQRP…PWKG), 1210-1241 (CPPH…GYDC), and 1247-1287 (CIPA…GEDS). The interval 1345–1369 (EELSGARDSSSWERQAPPTQPLGKE) is disordered. A helical membrane pass occupies residues 1444-1464 (PILCSPVVGVLLLALGALLVL). Over 1465–1964 (QLIRRRRREH…PLNSVVRNLN (500 aa)) the chain is Cytoplasmic. A disordered region spans residues 1516–1535 (VDEDGVAMCSGPEEGEAEET). ANK repeat units lie at residues 1628-1657 (TGET…NPNQ), 1661-1691 (AGRT…TVDA), 1695-1724 (DGTT…DVGA), 1728-1757 (RGKT…DKDA), and 1761-1790 (REQT…ARGL). Positions 1879–1907 (RSGSCGGPTTRGRRFSAGSRGRRGARASQ) are disordered.

It belongs to the NOTCH family. Heterodimer of a C-terminal fragment N(TM) and a N-terminal fragment N(EC) which are probably linked by disulfide bonds. Interacts with MAML1, MAML2 and MAML3 which act as transcriptional coactivators for NOTCH4. Synthesized in the endoplasmic reticulum as an inactive form which is proteolytically cleaved by a furin-like convertase in the trans-Golgi network before it reaches the plasma membrane to yield an active, ligand-accessible form. Cleavage results in a C-terminal fragment N(TM) and a N-terminal fragment N(EC). Following ligand binding, it is cleaved by TNF-alpha converting enzyme (TACE) to yield a membrane-associated intermediate fragment called notch extracellular truncation (NEXT). This fragment is then cleaved by presenilin dependent gamma-secretase to release a notch-derived peptide containing the intracellular domain (NICD) from the membrane. In terms of processing, phosphorylated. In terms of tissue distribution, highly expressed in lung, moderately in heart kidney, and at lower levels in the ovary and skeletal muscle. A very low expression is seen in the brain, intestine, liver and testis.

The protein resides in the cell membrane. The protein localises to the nucleus. Functions as a receptor for membrane-bound ligands Jagged1, Jagged2 and Delta1 to regulate cell-fate determination. Upon ligand activation through the released notch intracellular domain (NICD) it forms a transcriptional activator complex with RBPJ/RBPSUH and activates genes of the enhancer of split locus. Affects the implementation of differentiation, proliferation and apoptotic programs. May regulate branching morphogenesis in the developing vascular system. In Mus musculus (Mouse), this protein is Neurogenic locus notch homolog protein 4.